The sequence spans 329 residues: Malate dehydrogenase (329 aa).

12–18 (GAAGQIG) contacts NAD(+). Residues Arg95 and Arg101 each coordinate substrate. NAD(+)-binding positions include Asn108, Gln115, and 132–134 (VGN). The substrate site is built by Asn134 and Arg165. The active-site Proton acceptor is His190.

The protein belongs to the LDH/MDH superfamily. MDH type 2 family.

The catalysed reaction is (S)-malate + NAD(+) = oxaloacetate + NADH + H(+). Its function is as follows. Catalyzes the reversible oxidation of malate to oxaloacetate. This chain is Malate dehydrogenase, found in Bordetella petrii (strain ATCC BAA-461 / DSM 12804 / CCUG 43448).